The sequence spans 202 residues: Small ribosomal subunit protein uS4 (202 aa).

An S4 RNA-binding domain is found at 93–156; that stretch reads RRLDNMVYRL…KDLKIISEAV (64 aa).

This sequence belongs to the universal ribosomal protein uS4 family. In terms of assembly, part of the 30S ribosomal subunit. Contacts protein S5. The interaction surface between S4 and S5 is involved in control of translational fidelity.

Functionally, one of the primary rRNA binding proteins, it binds directly to 16S rRNA where it nucleates assembly of the body of the 30S subunit. With S5 and S12 plays an important role in translational accuracy. This chain is Small ribosomal subunit protein uS4, found in Pediococcus pentosaceus (strain ATCC 25745 / CCUG 21536 / LMG 10740 / 183-1w).